The primary structure comprises 655 residues: Chaperone protein dnaK1 (655 aa).

Threonine 197 is modified (phosphothreonine; by autocatalysis).

Belongs to the heat shock protein 70 family.

Functionally, acts as a chaperone. This chain is Chaperone protein dnaK1 (dnaK1), found in Synechococcus elongatus (strain ATCC 33912 / PCC 7942 / FACHB-805) (Anacystis nidulans R2).